The chain runs to 467 residues: Uronate isomerase (467 aa).

This sequence belongs to the metallo-dependent hydrolases superfamily. Uronate isomerase family.

It carries out the reaction D-glucuronate = D-fructuronate. The catalysed reaction is aldehydo-D-galacturonate = keto-D-tagaturonate. The protein operates within carbohydrate metabolism; pentose and glucuronate interconversion. The sequence is that of Uronate isomerase from Staphylococcus haemolyticus (strain JCSC1435).